The chain runs to 351 residues: Spermidine/putrescine import ATP-binding protein PotA (351 aa).

The region spanning 6–236 (LELRNVTKEY…PENAWVANFI (231 aa)) is the ABC transporter domain. ATP is bound at residue 38 to 45 (GPSGCGKT).

Belongs to the ABC transporter superfamily. Spermidine/putrescine importer (TC 3.A.1.11.1) family. As to quaternary structure, the complex is composed of two ATP-binding proteins (PotA), two transmembrane proteins (PotB and PotC) and a solute-binding protein (PotD).

Its subcellular location is the cell membrane. It carries out the reaction ATP + H2O + polyamine-[polyamine-binding protein]Side 1 = ADP + phosphate + polyamineSide 2 + [polyamine-binding protein]Side 1.. Functionally, part of the ABC transporter complex PotABCD involved in spermidine/putrescine import. Responsible for energy coupling to the transport system. The polypeptide is Spermidine/putrescine import ATP-binding protein PotA (Mycoplasma mycoides subsp. mycoides SC (strain CCUG 32753 / NCTC 10114 / PG1)).